The sequence spans 1279 residues: Maestro heat-like repeat-containing protein family member 7 (1279 aa).

The disordered stretch occupies residues 1-145 (MALSRGTSLI…NSSRPCSEDV (145 aa)). Low complexity predominate over residues 39–61 (PDLALAPPPEHALALTPALHPAL). Polar residues-rich tracts occupy residues 71 to 106 (PVSNDIPSHNASGATTPSSTQINTVDTADQGLNHTS) and 124 to 140 (PSSTQANVLSPENSSRP). N-linked (GlcNAc...) asparagine glycosylation is found at asparagine 200, asparagine 210, asparagine 255, asparagine 267, and asparagine 296. A Phosphoserine modification is found at serine 356. N-linked (GlcNAc...) asparagine glycosylation is present at asparagine 541. A run of 2 helical transmembrane segments spans residues 548 to 568 (TLVTLPFLISSGFPTLGLLLG) and 722 to 742 (LLPISFLASSFMTEVVVALLM). 4 HEAT repeats span residues 913 to 950 (QELCRILYLLIPLLERGDERHKITATAFFVELFRMEQV), 992 to 1029 (AKVQSLLPSMVKSLKNMDGMLVVEAVHDLKRIFKGQGK), 1035 to 1072 (AVYVEMLQILLPHFTDAREMVRASCINVYGKVVKKLQT), and 1080 to 1117 (EQLTSTLMPLLFIIQEGNAKVSQKCVKTLVCCSSFMNW).

Its subcellular location is the membrane. The protein is Maestro heat-like repeat-containing protein family member 7 (Mroh7) of Mus musculus (Mouse).